The sequence spans 313 residues: Beta-ribofuranosylphenol 5'-phosphate synthase (313 aa).

Belongs to the beta-RFA-P synthase family. In terms of assembly, homodimer.

The catalysed reaction is 5-phospho-alpha-D-ribose 1-diphosphate + 4-hydroxybenzoate + H(+) = 4-(beta-D-ribofuranosyl)phenol 5'-phosphate + CO2 + diphosphate. The enzyme catalyses 4-aminobenzoate + 5-phospho-alpha-D-ribose 1-diphosphate + H(+) = 4-(beta-D-ribofuranosyl)aminobenzene 5'-phosphate + CO2 + diphosphate. It functions in the pathway cofactor biosynthesis; 5,6,7,8-tetrahydromethanopterin biosynthesis. Functionally, catalyzes the condensation of 4-hydroxybenzoate (HB) with 5-phospho-alpha-D-ribose 1-diphosphate (PRPP) to produce beta-ribofuranosylphenol 5'-phosphate (beta-RFH-P). Also catalyzes the condensation of 4-aminobenzoate (pABA) with PRPP to produce beta-ribofuranosylaminobenzene 5'-phosphate (beta-RFA-P). The chain is Beta-ribofuranosylphenol 5'-phosphate synthase from Archaeoglobus fulgidus (strain ATCC 49558 / DSM 4304 / JCM 9628 / NBRC 100126 / VC-16).